We begin with the raw amino-acid sequence, 137 residues long: Methylglyoxal synthase (137 aa).

In terms of domain architecture, MGS-like spans 1-137 (MKIALIAHDK…DLLRGEEPNV (137 aa)). Substrate contacts are provided by residues His-8, Lys-12, 34–37 (TGTT), and 54–55 (SG). The active-site Proton donor/acceptor is Asp-60. His-87 lines the substrate pocket.

Belongs to the methylglyoxal synthase family.

The enzyme catalyses dihydroxyacetone phosphate = methylglyoxal + phosphate. Its function is as follows. Catalyzes the formation of methylglyoxal from dihydroxyacetone phosphate. This Bacillus subtilis (strain 168) protein is Methylglyoxal synthase.